We begin with the raw amino-acid sequence, 230 residues long: Probable phosphatase IndB (230 aa).

Asp-8 serves as the catalytic Nucleophile. Asp-8, Asp-10, and Asp-169 together coordinate Mg(2+). The Proton donor role is filled by Asp-10.

The protein belongs to the HAD-like hydrolase superfamily. Mg(2+) serves as cofactor.

Its function is as follows. Part of an operon that could be involved in the biosynthesis of the blue pigment indigoidine, which is implicated in pathogenicity and protection from oxidative stress. The sequence is that of Probable phosphatase IndB from Dickeya dadantii (strain 3937) (Erwinia chrysanthemi (strain 3937)).